Reading from the N-terminus, the 1023-residue chain is Probable histidine kinase 3 (1023 aa).

Topologically, residues 1–80 (MDEMSCGGGG…RGWRVVRETW (80 aa)) are cytoplasmic. Residues 81–101 (WWVLLLWILAGSLGSFYLFLF) traverse the membrane as a helical segment. Residues 102–387 (MNAQSLDKRR…CRFEKKPPWP (286 aa)) lie on the Extracellular side of the membrane. The CHASE domain occupies 151–352 (TPSAIDQMTF…TNESPISMYG (202 aa)). A helical membrane pass occupies residues 388-408 (WLAITSSFGTLVIALLTGHIF). The Cytoplasmic portion of the chain corresponds to 409-1023 (QATVHRIAKV…RFFQNHDQVE (615 aa)). The region spanning 445–715 (TVSHEIRTPM…TFTFTAVLMR (271 aa)) is the Histidine kinase domain. Position 448 is a phosphohistidine; by autocatalysis (histidine 448). 2 consecutive Response regulatory domains span residues 732–854 (NALV…RRAL) and 880–1016 (QIIV…ARFF). A 4-aspartylphosphate modification is found at aspartate 783. The tract at residues 812 to 831 (LFLLGSSASSPKGGSDTSRE) is disordered. The span at 817–827 (SSASSPKGGSD) shows a compositional bias: polar residues. 4-aspartylphosphate is present on aspartate 930.

Activation probably requires a transfer of a phosphate group between a His in the transmitter domain and an Asp of the receiver domain. Highly expressed in young leaves and at lower levels in roots, mature leaves, stems and spikelets.

The protein localises to the cell membrane. It carries out the reaction ATP + protein L-histidine = ADP + protein N-phospho-L-histidine.. Its function is as follows. Cytokinin receptor related to bacterial two-component regulators. Functions as a histidine kinase and transmits the stress signal to a downstream MAPK cascade. This Oryza sativa subsp. japonica (Rice) protein is Probable histidine kinase 3.